A 190-amino-acid polypeptide reads, in one-letter code: dCTP deaminase, dUMP-forming (190 aa).

DCTP is bound by residues 101–106, D119, 127–129, Q148, Y162, and Q174; these read KSSLGR and TLE. E129 serves as the catalytic Proton donor/acceptor. The tract at residues 162 to 184 is disordered; sequence YGSAKVGSKYQGQRGPTPSRSYQ. Positions 171–184 are enriched in polar residues; that stretch reads YQGQRGPTPSRSYQ.

It belongs to the dCTP deaminase family. As to quaternary structure, homotrimer.

It catalyses the reaction dCTP + 2 H2O = dUMP + NH4(+) + diphosphate. Its pathway is pyrimidine metabolism; dUMP biosynthesis; dUMP from dCTP: step 1/1. Its function is as follows. Bifunctional enzyme that catalyzes both the deamination of dCTP to dUTP and the hydrolysis of dUTP to dUMP without releasing the toxic dUTP intermediate. The sequence is that of dCTP deaminase, dUMP-forming from Mycobacterium sp. (strain JLS).